A 187-amino-acid polypeptide reads, in one-letter code: Adenylate kinase (187 aa).

An ATP-binding site is contributed by G10–T15. Positions S30–V59 are NMP. AMP contacts are provided by residues T31, R36, N57–V59, G85–R88, and Q92. The segment at G126–D136 is LID. R127 contributes to the ATP binding site. Positions 133 and 144 each coordinate AMP. An ATP-binding site is contributed by G172.

It belongs to the adenylate kinase family. As to quaternary structure, monomer.

It is found in the cytoplasm. It catalyses the reaction AMP + ATP = 2 ADP. It functions in the pathway purine metabolism; AMP biosynthesis via salvage pathway; AMP from ADP: step 1/1. Its function is as follows. Catalyzes the reversible transfer of the terminal phosphate group between ATP and AMP. Plays an important role in cellular energy homeostasis and in adenine nucleotide metabolism. The sequence is that of Adenylate kinase from Stenotrophomonas maltophilia (strain K279a).